We begin with the raw amino-acid sequence, 404 residues long: Phosphopentomutase (404 aa).

Mn(2+) is bound by residues Asp10, Asp303, His308, Asp344, His345, and His356.

It belongs to the phosphopentomutase family. Requires Mn(2+) as cofactor.

It localises to the cytoplasm. The enzyme catalyses 2-deoxy-alpha-D-ribose 1-phosphate = 2-deoxy-D-ribose 5-phosphate. The catalysed reaction is alpha-D-ribose 1-phosphate = D-ribose 5-phosphate. It participates in carbohydrate degradation; 2-deoxy-D-ribose 1-phosphate degradation; D-glyceraldehyde 3-phosphate and acetaldehyde from 2-deoxy-alpha-D-ribose 1-phosphate: step 1/2. Functionally, isomerase that catalyzes the conversion of deoxy-ribose 1-phosphate (dRib-1-P) and ribose 1-phosphate (Rib-1-P) to deoxy-ribose 5-phosphate (dRib-5-P) and ribose 5-phosphate (Rib-5-P), respectively. The polypeptide is Phosphopentomutase (Shewanella baltica (strain OS223)).